We begin with the raw amino-acid sequence, 308 residues long: Ribosomal RNA small subunit methyltransferase H (308 aa).

Residues 32–34 (GGH), aspartate 52, phenylalanine 78, aspartate 100, and glutamine 107 each bind S-adenosyl-L-methionine.

It belongs to the methyltransferase superfamily. RsmH family.

Its subcellular location is the cytoplasm. It carries out the reaction cytidine(1402) in 16S rRNA + S-adenosyl-L-methionine = N(4)-methylcytidine(1402) in 16S rRNA + S-adenosyl-L-homocysteine + H(+). Its function is as follows. Specifically methylates the N4 position of cytidine in position 1402 (C1402) of 16S rRNA. The polypeptide is Ribosomal RNA small subunit methyltransferase H (Legionella pneumophila (strain Paris)).